We begin with the raw amino-acid sequence, 549 residues long: Probable protein kinase UbiB (549 aa).

The Protein kinase domain occupies 123 to 504 (DFDETALASA…QRNNTGFSRL (382 aa)). Residues 129–137 (LASASIAQV) and Lys-156 each bind ATP. Asp-291 functions as the Proton acceptor in the catalytic mechanism. A helical membrane pass occupies residues 505 to 525 (MILGIAIAGTFWKFEMLPLWV).

It belongs to the ABC1 family. UbiB subfamily.

Its subcellular location is the cell inner membrane. Its pathway is cofactor biosynthesis; ubiquinone biosynthesis [regulation]. Its function is as follows. Is probably a protein kinase regulator of UbiI activity which is involved in aerobic coenzyme Q (ubiquinone) biosynthesis. This chain is Probable protein kinase UbiB, found in Glaesserella parasuis serovar 5 (strain SH0165) (Haemophilus parasuis).